The sequence spans 187 residues: Phosphatidylethanolamine-binding protein 2 (187 aa).

Phosphoserine occurs at positions 13, 52, and 54.

The protein belongs to the phosphatidylethanolamine-binding protein family. As to expression, testis specific.

It localises to the cytoplasm. Functionally, may bind to phospholipids. May act as serine protease inhibitor. The protein is Phosphatidylethanolamine-binding protein 2 (Pbp2) of Mus musculus (Mouse).